The primary structure comprises 141 residues: Hemoglobin subunit alpha (141 aa).

One can recognise a Globin domain in the interval 1–141 (VLSAADKTAI…VATALGSHYR (141 aa)). Residue His59 participates in O2 binding. His88 serves as a coordination point for heme b.

The protein belongs to the globin family. As to quaternary structure, heterotetramer of two alpha chains and two beta chains. In terms of tissue distribution, red blood cells.

Involved in oxygen transport from the lung to the various peripheral tissues. This Squalus acanthias (Spiny dogfish) protein is Hemoglobin subunit alpha (HBA).